A 3071-amino-acid polypeptide reads, in one-letter code: Intermembrane lipid transfer protein vps1301 (3071 aa).

Residues 2-115 (LEGLVAGLLN…QQALKQEQLD (114 aa)) form the Chorein N-terminal domain. The SHR-BD domain occupies 2143 to 2415 (HIEIFSPYII…KYSWDYPCCA (273 aa)).

It belongs to the VPS13 family.

It is found in the golgi apparatus. It localises to the trans-Golgi network. Functionally, mediates the transfer of lipids between membranes at organelle contact sites. May play a role in mitochondrial lipid homeostasis, Golgi vesicle transport, reticulophagy, actin cytoskeleton organization and formation of the forespore membrane. The polypeptide is Intermembrane lipid transfer protein vps1301 (Schizosaccharomyces pombe (strain 972 / ATCC 24843) (Fission yeast)).